A 262-amino-acid polypeptide reads, in one-letter code: DNA-directed RNA polymerase subunit Rpo3 (262 aa).

This sequence belongs to the archaeal Rpo3/eukaryotic RPB3 RNA polymerase subunit family. In terms of assembly, part of the RNA polymerase complex.

The protein resides in the cytoplasm. It carries out the reaction RNA(n) + a ribonucleoside 5'-triphosphate = RNA(n+1) + diphosphate. In terms of biological role, DNA-dependent RNA polymerase (RNAP) catalyzes the transcription of DNA into RNA using the four ribonucleoside triphosphates as substrates. The chain is DNA-directed RNA polymerase subunit Rpo3 from Pyrobaculum islandicum (strain DSM 4184 / JCM 9189 / GEO3).